Here is a 666-residue protein sequence, read N- to C-terminus: Secreted protein ARB_01864 (666 aa).

The first 18 residues, 1 to 18 (MRFSTLVSLAAWAAAALA), serve as a signal peptide directing secretion. N-linked (GlcNAc...) asparagine glycosylation is found at asparagine 160, asparagine 216, asparagine 342, asparagine 405, asparagine 594, asparagine 600, and asparagine 662. Residues 323–353 (RGSMKPRGVPNPTRRAIKGNATTSTQPYQHP) are disordered.

The protein localises to the secreted. This Arthroderma benhamiae (strain ATCC MYA-4681 / CBS 112371) (Trichophyton mentagrophytes) protein is Secreted protein ARB_01864.